The sequence spans 112 residues: Ig kappa chain V-II region MOPC 167 (112 aa).

Positions 1 to 23 (DIVITQDELSNPVTSGESVSISC) are framework-1. A disulfide bridge links Cys23 with Cys93. Residues 24-39 (RSSKSLLYKDGKTYLN) form a complementarity-determining-1 region. The tract at residues 40 to 54 (WFLQRPGQSPQLLIS) is framework-2. The interval 55 to 61 (LMSTRAS) is complementarity-determining-2. The framework-3 stretch occupies residues 62-93 (GVSDRFSGSGSRTDFTLEISRVKAEDVGVYYC). The interval 94-102 (QQLVEYPLT) is complementarity-determining-3. The tract at residues 103–112 (FGAGTKLELK) is framework-4.

In Mus musculus (Mouse), this protein is Ig kappa chain V-II region MOPC 167.